Here is a 257-residue protein sequence, read N- to C-terminus: Zinc-finger homeodomain protein 6 (257 aa).

The interval methionine 1–glycine 35 is disordered. Low complexity predominate over residues proline 21–glycine 35. Residues tyrosine 45–aspartate 93 form a ZF-HD dimerization-type; degenerate zinc finger. Pro residues predominate over residues proline 106–histidine 125. Disordered stretches follow at residues proline 106–threonine 182 and asparagine 228–glutamine 257. Over residues tyrosine 141–serine 155 the composition is skewed to low complexity. The homeobox DNA-binding region spans arginine 174–serine 237. The span at arginine 242–glutamine 257 shows a compositional bias: low complexity.

Homo- and heterodimer with other ZFHD proteins.

Its subcellular location is the nucleus. Its function is as follows. Putative transcription factor. In Oryza sativa subsp. indica (Rice), this protein is Zinc-finger homeodomain protein 6 (ZHD6).